Here is a 183-residue protein sequence, read N- to C-terminus: Ras-related protein Rap-2c (183 aa).

Residue 10 to 17 participates in GTP binding; it reads GSGGVGKS. Positions 32–40 match the Effector region motif; that stretch reads YDPTIEDFY. GTP contacts are provided by residues 57 to 61 and 116 to 119; these read DTAGT and NKVD. S-palmitoyl cysteine attachment occurs at residues cysteine 176 and cysteine 177. Cysteine 180 carries the post-translational modification Cysteine methyl ester. Cysteine 180 is lipidated: S-geranylgeranyl cysteine. Residues 181–183 constitute a propeptide, removed in mature form; the sequence is VVQ.

It belongs to the small GTPase superfamily. Ras family. Post-translationally, palmitoylated. Palmitoylation is required for association with recycling endosome membranes and activation of TNIK.

It localises to the cytoplasm. The protein localises to the recycling endosome membrane. The enzyme catalyses GTP + H2O = GDP + phosphate + H(+). In terms of biological role, small GTP-binding protein which cycles between a GDP-bound inactive and a GTP-bound active form. May play a role in cytoskeletal rearrangements and regulate cell spreading through activation of the effector TNIK. May play a role in SRE-mediated gene transcription. The chain is Ras-related protein Rap-2c (RAP2C) from Bos taurus (Bovine).